The primary structure comprises 148 residues: Lipoprotein MlpA (148 aa).

The first 17 residues, 1 to 17 (MKIINILFCLFLLLLNS), serve as a signal peptide directing secretion. The N-palmitoyl cysteine moiety is linked to residue cysteine 18. Cysteine 18 carries S-diacylglycerol cysteine lipidation. Residues 26–58 (LKNNAQQTKSRGKRDLTQKEATPEKPKSKEELL) form a disordered region. Over residues 38-58 (KRDLTQKEATPEKPKSKEELL) the composition is skewed to basic and acidic residues.

This sequence belongs to the Multicopy lipoprotein (Mlp) family.

The protein resides in the cell outer membrane. In terms of biological role, an outer membrane protein that may participate in pathogenesis. Some human Lyme disease patients have antibodies against this protein. The Mlp proteins probably undergo intragenic recombination, generating new alleles. In Borreliella burgdorferi (strain ATCC 35210 / DSM 4680 / CIP 102532 / B31) (Borrelia burgdorferi), this protein is Lipoprotein MlpA (mlpA).